The sequence spans 201 residues: Protease (201 aa).

Active-site residues include H55, D72, and C122.

It belongs to the peptidase C5 family. As to quaternary structure, interacts with protease cofactor pVI-C; this interaction is necessary for protease activation.

The protein resides in the virion. It is found in the host nucleus. The enzyme catalyses Cleaves proteins of the adenovirus and its host cell at two consensus sites: -Yaa-Xaa-Gly-Gly-|-Xaa- and -Yaa-Xaa-Gly-Xaa-|-Gly- (in which Yaa is Met, Ile or Leu, and Xaa is any amino acid).. Requires DNA and protease cofactor for maximal activation. Inside nascent virions, becomes partially activated by binding to the viral DNA, allowing it to cleave the cofactor that binds to the protease and fully activates it. Actin, like the viral protease cofactor, seems to act as a cofactor in the cleavage of cytokeratin 18 and of actin itself. In terms of biological role, cleaves viral precursor proteins (pTP, pIIIa, pVI, pVII, pVIII, and pX) inside newly assembled particles giving rise to mature virions. Protease complexed to its cofactor slides along the viral DNA to specifically locate and cleave the viral precursors. Mature virions have a weakened organization compared to the unmature virions, thereby facilitating subsequent uncoating. Without maturation, the particle lacks infectivity and is unable to uncoat. Late in adenovirus infection, in the cytoplasm, may participate in the cytoskeleton destruction. Cleaves host cell cytoskeletal keratins K7 and K18. This Ovis aries (Sheep) protein is Protease.